Consider the following 307-residue polypeptide: MQAALTAFFMLLFSLLSLLGIAANGFIVLVLGREWLRYGRLLPLDMILISLGASRFCLQLVGTVHNFYYSAQKVEYSGGLGRQFFHLHWHFLNSATFWFCSWLSVLFCVKIANITHPTFLWLKWRFPAWVPWLLLGSVLISFIITLLFFWVNYPAYQEFLIRKFSVNMTYKWNTRIETYYFPSLKLVIWSIPFSVFLVSIMLLINSLRRHTQRMQHNGHSLQDPSTQAHTRALKSLISFLILYALSFLSLIIDATKFISMQNDFYWPWQIAVYLCISIHPFILIFSNLKLRSVFSQLLLLARGFWVA.

Over 1–7 (MQAALTA) the chain is Extracellular. Residues 8–28 (FFMLLFSLLSLLGIAANGFIV) form a helical membrane-spanning segment. Over 29–40 (LVLGREWLRYGR) the chain is Cytoplasmic. The chain crosses the membrane as a helical span at residues 41 to 61 (LLPLDMILISLGASRFCLQLV). At 62 to 88 (GTVHNFYYSAQKVEYSGGLGRQFFHLH) the chain is on the extracellular side. Residues 89 to 109 (WHFLNSATFWFCSWLSVLFCV) traverse the membrane as a helical segment. Residues 110 to 129 (KIANITHPTFLWLKWRFPAW) are Cytoplasmic-facing. The helical transmembrane segment at 130-150 (VPWLLLGSVLISFIITLLFFW) threads the bilayer. Over 151–183 (VNYPAYQEFLIRKFSVNMTYKWNTRIETYYFPS) the chain is Extracellular. The N-linked (GlcNAc...) asparagine glycan is linked to N167. A helical membrane pass occupies residues 184 to 204 (LKLVIWSIPFSVFLVSIMLLI). Residues 205–234 (NSLRRHTQRMQHNGHSLQDPSTQAHTRALK) are Cytoplasmic-facing. A helical membrane pass occupies residues 235–255 (SLISFLILYALSFLSLIIDAT). The Extracellular portion of the chain corresponds to 256 to 264 (KFISMQNDF). Residues 265–285 (YWPWQIAVYLCISIHPFILIF) traverse the membrane as a helical segment. Over 286-307 (SNLKLRSVFSQLLLLARGFWVA) the chain is Cytoplasmic.

This sequence belongs to the G-protein coupled receptor T2R family.

The protein resides in the membrane. Functionally, receptor that may play a role in the perception of bitterness and is gustducin-linked. May play a role in sensing the chemical composition of the gastrointestinal content. The activity of this receptor may stimulate alpha gustducin, mediate PLC-beta-2 activation and lead to the gating of TRPM5. The chain is Taste receptor type 2 member 41 (TAS2R41) from Pan paniscus (Pygmy chimpanzee).